The primary structure comprises 115 residues: NADH-ubiquinone oxidoreductase chain 3 (115 aa).

3 helical membrane passes run 4 to 24 (IVIL…AFWL), 55 to 75 (FFLI…LLPL), and 84 to 104 (TYFT…GLMY).

It belongs to the complex I subunit 3 family. As to quaternary structure, core subunit of respiratory chain NADH dehydrogenase (Complex I) which is composed of 45 different subunits. Interacts with TMEM186. Interacts with TMEM242.

The protein resides in the mitochondrion inner membrane. The catalysed reaction is a ubiquinone + NADH + 5 H(+)(in) = a ubiquinol + NAD(+) + 4 H(+)(out). Functionally, core subunit of the mitochondrial membrane respiratory chain NADH dehydrogenase (Complex I) which catalyzes electron transfer from NADH through the respiratory chain, using ubiquinone as an electron acceptor. Essential for the catalytic activity of complex I. This Eligmodontia typus (Highland gerbil mouse) protein is NADH-ubiquinone oxidoreductase chain 3.